Here is a 230-residue protein sequence, read N- to C-terminus: Mitochondrial fission factor homolog B (230 aa).

Residues 1-210 (MSGAAFPSPT…ENKERAKREM (210 aa)) are Cytoplasmic-facing. Positions 117 to 153 (EQTSSVSHPSEEVRTQTKTRRERSVSENAGVHHNGPL) are disordered. S142 is subject to Phosphoserine. Positions 179–210 (VDATSLRRQIVKLNRRLQLLEEENKERAKREM) form a coiled coil. A helical; Anchor for type IV membrane protein membrane pass occupies residues 211-228 (VMYSITVAFWLVNSWVWF). Residues 229 to 230 (RR) are Extracellular-facing.

It belongs to the Tango11 family.

It is found in the mitochondrion outer membrane. The protein resides in the peroxisome. In terms of biological role, plays a role in mitochondrial and peroxisomal fission. Promotes the recruitment and association of the fission mediator dynamin-related protein 1 (DNM1L) to the mitochondrial surface. This Danio rerio (Zebrafish) protein is Mitochondrial fission factor homolog B.